The sequence spans 151 residues: uncharacterized protein (151 aa).

This is an uncharacterized protein from Gallid herpesvirus 2 (strain GA) (GaHV-2).